The sequence spans 1827 residues: Sucrase-isomaltase, intestinal (1827 aa).

The Cytoplasmic segment spans residues 2-12 (ARKKFSGLEIS). The residue at position 7 (serine 7) is a Phosphoserine; by PKA. The helical; Signal-anchor for type II membrane protein transmembrane segment at 13-32 (LIVLFVIVTIIAIALIVVLA) threads the bilayer. Over 33-1827 (TKTPAVDEIS…LEEPIEINWS (1795 aa)) the chain is Lumenal. A disordered region spans residues 40 to 61 (EISDSTSTPATTRVTTNPSDSG). The segment covering 45 to 55 (TSTPATTRVTT) has biased composition (low complexity). The region spanning 61–110 (GKCPNVLNDPVNVRINCIPEQFPTEGICAQRGCCWRPWNDSLIPWCFFVD) is the P-type 1 domain. 3 disulfide bridges follow: cysteine 63-cysteine 94, cysteine 77-cysteine 93, and cysteine 88-cysteine 106. Residue asparagine 99 is glycosylated (N-linked (GlcNAc...) asparagine). The interval 110 to 1007 (DNHGYNVQDM…DLQLNTANAR (898 aa)) is isomaltase. Sulfotyrosine occurs at positions 237 and 239. Positions 264 and 388 each coordinate substrate. Sulfotyrosine is present on residues tyrosine 391 and tyrosine 400. N-linked (GlcNAc...) asparagine glycans are attached at residues asparagine 437 and asparagine 455. Aspartate 505 serves as the catalytic Nucleophile; for isomaltase activity. Cysteine 520 and cysteine 545 are oxidised to a cystine. Arginine 588 serves as a coordination point for substrate. Catalysis depends on aspartate 604, which acts as the For isomaltase activity. Residues cysteine 635 and cysteine 646 are joined by a disulfide bond. Histidine 662 provides a ligand contact to substrate. Residues tyrosine 667, tyrosine 763, and tyrosine 765 each carry the sulfotyrosine modification. Asparagine 823, asparagine 855, asparagine 904, and asparagine 926 each carry an N-linked (GlcNAc...) asparagine glycan. The 47-residue stretch at 932–978 (NQIFSENERFNCYPDADLATEQKCTQRGCVWRTGSSLSKAPECYFPR) folds into the P-type 2 domain. The tract at residues 1008 to 1827 (IKLPSDPIST…LEEPIEINWS (820 aa)) is sucrase. 4 N-linked (GlcNAc...) asparagine glycosylation sites follow: asparagine 1235, asparagine 1303, asparagine 1340, and asparagine 1354. Aspartate 1394 functions as the Nucleophile; for sucrase activity in the catalytic mechanism. Residue glutamate 1397 is the For sucrase activity of the active site. Asparagine 1403 carries N-linked (GlcNAc...) asparagine glycosylation. Residue aspartate 1500 is the Proton donor; for isomaltase activity of the active site. Residues asparagine 1535, asparagine 1572, asparagine 1675, asparagine 1748, asparagine 1763, and asparagine 1815 are each glycosylated (N-linked (GlcNAc...) asparagine).

The protein belongs to the glycosyl hydrolase 31 family. In terms of assembly, the resulting sucrase and isomaltase subunits stay associated with one another in a complex by non-covalent linkages. Post-translationally, the precursor is proteolytically cleaved when exposed to pancreatic proteases in the intestinal lumen. Sulfated. In terms of tissue distribution, expressed in the poorly differentiated crypt cells of the small intestine as well as in the mature villous cells. Expressed at very low levels in the colon.

The protein resides in the apical cell membrane. It catalyses the reaction Hydrolysis of sucrose and maltose by an alpha-D-glucosidase-type action.. It carries out the reaction Hydrolysis of (1-&gt;6)-alpha-D-glucosidic linkages in some oligosaccharides produced from starch and glycogen by alpha-amylase, and in isomaltose.. Functionally, plays an important role in the final stage of carbohydrate digestion. Isomaltase activity is specific for both alpha-1,4- and alpha-1,6-oligosaccharides. The polypeptide is Sucrase-isomaltase, intestinal (SI) (Homo sapiens (Human)).